Consider the following 276-residue polypeptide: Undecaprenyl-diphosphatase (276 aa).

The next 8 membrane-spanning stretches (helical) occupy residues 2–22, 43–63, 83–103, 111–131, 147–167, 186–206, 224–244, and 255–275; these read LEIL…FLPI, FIDM…VVLY, WTLW…GLPL, LMNW…FIVI, TLPY…LIPG, YVAA…ASLL, LILA…IRFL, and AFGW…ALLA.

It belongs to the UppP family.

It localises to the cell membrane. It catalyses the reaction di-trans,octa-cis-undecaprenyl diphosphate + H2O = di-trans,octa-cis-undecaprenyl phosphate + phosphate + H(+). Its function is as follows. Catalyzes the dephosphorylation of undecaprenyl diphosphate (UPP). Confers resistance to bacitracin. The polypeptide is Undecaprenyl-diphosphatase (Limosilactobacillus fermentum (strain NBRC 3956 / LMG 18251) (Lactobacillus fermentum)).